The primary structure comprises 286 residues: ATP phosphoribosyltransferase (286 aa).

The protein belongs to the ATP phosphoribosyltransferase family. Long subfamily. It depends on Mg(2+) as a cofactor.

Its subcellular location is the cytoplasm. The enzyme catalyses 1-(5-phospho-beta-D-ribosyl)-ATP + diphosphate = 5-phospho-alpha-D-ribose 1-diphosphate + ATP. It functions in the pathway amino-acid biosynthesis; L-histidine biosynthesis; L-histidine from 5-phospho-alpha-D-ribose 1-diphosphate: step 1/9. Feedback inhibited by histidine. Its function is as follows. Catalyzes the condensation of ATP and 5-phosphoribose 1-diphosphate to form N'-(5'-phosphoribosyl)-ATP (PR-ATP). Has a crucial role in the pathway because the rate of histidine biosynthesis seems to be controlled primarily by regulation of HisG enzymatic activity. This chain is ATP phosphoribosyltransferase, found in Paenarthrobacter aurescens (strain TC1).